A 151-amino-acid chain; its full sequence is Endoribonuclease YbeY (151 aa).

Zn(2+)-binding residues include His113, His117, and His123.

This sequence belongs to the endoribonuclease YbeY family. Requires Zn(2+) as cofactor.

It localises to the cytoplasm. Its function is as follows. Single strand-specific metallo-endoribonuclease involved in late-stage 70S ribosome quality control and in maturation of the 3' terminus of the 16S rRNA. The protein is Endoribonuclease YbeY of Polaromonas naphthalenivorans (strain CJ2).